A 504-amino-acid polypeptide reads, in one-letter code: 5-epiaristolochene 1,3-dihydroxylase (504 aa).

The chain crosses the membrane as a helical span at residues Gln-2–Trp-22. Cys-442 provides a ligand contact to heme.

Belongs to the cytochrome P450 family. Heme is required as a cofactor.

Its subcellular location is the membrane. It catalyses the reaction (+)-5-epi-aristolochene + 2 reduced [NADPH--hemoprotein reductase] + 2 O2 = capsidiol + 2 oxidized [NADPH--hemoprotein reductase] + 2 H2O + 2 H(+). With respect to regulation, inhibited by ancymidol and ketoconazole. Its function is as follows. Involved in the biosynthesis of capsidiol. Catalyzes the successive and independent hydroxylations at the C1 and C3 positions of 5-epiaristolochene. The second hydroxylation step is 8-fold more efficient than the first hydroxylation reaction. Capable of utilizing premnaspirodiene as a substrate. The polypeptide is 5-epiaristolochene 1,3-dihydroxylase (CYP71D20) (Nicotiana tabacum (Common tobacco)).